The primary structure comprises 305 residues: Putative ABC transporter molybdenum-binding protein HVO_B0369 (305 aa).

Positions 1 to 40 (MNPDSAAGRSSRRAFLAAVGGVAAGGLTATAGCLGRGEEA) form a signal peptide, tat-type signal.

Belongs to the bacterial solute-binding protein 1 family. WtpA subfamily. In terms of assembly, the complex is composed of two ATP-binding proteins, two transmembrane proteins (HVO_B0370) and a solute-binding protein (HVO_B0369). Post-translationally, predicted to be exported by the Tat system. The position of the signal peptide cleavage has not been experimentally proven.

Functionally, part of an ABC transporter complex involved in molybdenum import. This is Putative ABC transporter molybdenum-binding protein HVO_B0369 from Haloferax volcanii (strain ATCC 29605 / DSM 3757 / JCM 8879 / NBRC 14742 / NCIMB 2012 / VKM B-1768 / DS2) (Halobacterium volcanii).